A 101-amino-acid chain; its full sequence is Small ribosomal subunit protein uS14A (101 aa).

The segment at 31–59 (IRSPASSPEQRVAAQSELNRQPRDASAVR) is disordered.

The protein belongs to the universal ribosomal protein uS14 family. Part of the 30S ribosomal subunit. Contacts proteins S3 and S10.

Its function is as follows. Binds 16S rRNA, required for the assembly of 30S particles and may also be responsible for determining the conformation of the 16S rRNA at the A site. This is Small ribosomal subunit protein uS14A from Mycobacteroides abscessus (strain ATCC 19977 / DSM 44196 / CCUG 20993 / CIP 104536 / JCM 13569 / NCTC 13031 / TMC 1543 / L948) (Mycobacterium abscessus).